A 684-amino-acid polypeptide reads, in one-letter code: Extracellular lipase (684 aa).

A signal peptide spans 1–48 (MKKKLIYAAVVSALLAGCGGSDDNKGDTSSYLDYLLTGSNAVGPSALA). 2 disordered regions span residues 321–405 (SIPV…ADWG) and 462–493 (QRERLRPGAGPDLEDLCRHAGGQEGGAGGDRS). The span at 385–405 (ADCRSDPPERAAGRGEQADWG) shows a compositional bias: basic and acidic residues. Ser568 functions as the Nucleophile in the catalytic mechanism.

Belongs to the AB hydrolase superfamily. Lipase family. As to quaternary structure, monomer.

It localises to the secreted. The catalysed reaction is a triacylglycerol + H2O = a diacylglycerol + a fatty acid + H(+). In terms of biological role, the optimum chain lengths for the acyl moiety is C6 for ester hydrolysis and C6 and C8 for triacylglycerol hydrolysis. This chain is Extracellular lipase, found in Aeromonas hydrophila.